We begin with the raw amino-acid sequence, 153 residues long: Large ribosomal subunit protein uL15 (153 aa).

Positions 21-42 are disordered; sequence RGIGSGKGKTGGRGIKGQKSRS. The segment covering 23–35 has biased composition (gly residues); sequence IGSGKGKTGGRGI.

It belongs to the universal ribosomal protein uL15 family. In terms of assembly, part of the 50S ribosomal subunit.

Binds to the 23S rRNA. The polypeptide is Large ribosomal subunit protein uL15 (Rickettsia peacockii (strain Rustic)).